Consider the following 584-residue polypeptide: Chondroitin proteoglycan 1 (584 aa).

Residues 1-17 form the signal peptide; the sequence is MTLKPVLLAFLVASAYA. An O-linked (Xyl...) (chondroitin sulfate) serine glycan is attached at Ser50. 3 Chitin-binding type-2 domains span residues 58–115, 211–268, and 524–578; these read DTDC…QCGG, TKSC…ECTN, and VPAC…ECHQ. Disulfide bonds link Cys91–Cys104 and Cys244–Cys257. Residues 267-295 are disordered; sequence TNGSGNDEGSADETTPESSGEMPYSNGYG. The N-linked (GlcNAc...) asparagine glycan is linked to Asn268. Cys554 and Cys567 are oxidised to a cystine.

As to expression, expressed in the germline.

Its function is as follows. Required for polar body extrusion during cytokinesis in embryo development. Affects cortical granule size. Has roles in meiotic chromosome segregation, osmotic barrier function and polarization in conjunction with cpg-2. Binds chitin. The protein is Chondroitin proteoglycan 1 (cpg-1) of Caenorhabditis elegans.